The sequence spans 238 residues: Ribitol-5-phosphate cytidylyltransferase 1 (238 aa).

Residues 7-10 (LAGG) and 81-87 (GSDRNDT) each bind CTP.

Belongs to the IspD/TarI cytidylyltransferase family. TarI subfamily.

The catalysed reaction is D-ribitol 5-phosphate + CTP + H(+) = CDP-L-ribitol + diphosphate. Its pathway is cell wall biogenesis; poly(ribitol phosphate) teichoic acid biosynthesis. Catalyzes the transfer of the cytidylyl group of CTP to D-ribitol 5-phosphate. The sequence is that of Ribitol-5-phosphate cytidylyltransferase 1 from Staphylococcus aureus (strain bovine RF122 / ET3-1).